We begin with the raw amino-acid sequence, 248 residues long: Myelin protein P0 (248 aa).

Positions 1 to 28 (MAPGAPSSSPSPILAALLFSSLVLSPVQ) are cleaved as a signal peptide. Residues 29–155 (AIVVYTDKEV…VFEKVPTRYG (127 aa)) are Extracellular-facing. Residues 30–143 (IVVYTDKEVH…DIVGKTSQVT (114 aa)) enclose the Ig-like V-type domain. A disulfide bridge links C50 with C127. Residue N122 is glycosylated (N-linked (GlcNAc...) (complex) asparagine). A helical membrane pass occupies residues 156–176 (VVLGAVIGGVLGVVLLALLLF). Residues 177–248 (YLIRYCWLRR…GLGESRKDKK (72 aa)) are Cytoplasmic-facing. S210 carries the phosphoserine; by PKC modification. A disordered region spans residues 224–248 (DHSRSTKAASEKKTKGLGESRKDKK). 2 positions are modified to phosphoserine: S226 and S228. Residues S233 and S243 each carry the phosphoserine; by PKC modification.

This sequence belongs to the myelin P0 protein family. As to quaternary structure, homodimer and homotetramer. N-glycosylated; contains sulfate-substituted glycan. In terms of tissue distribution, found only in peripheral nervous system Schwann cells.

The protein localises to the cell membrane. Functionally, is an adhesion molecule necessary for normal myelination in the peripheral nervous system. It mediates adhesion between adjacent myelin wraps and ultimately drives myelin compaction. This Bos taurus (Bovine) protein is Myelin protein P0 (MPZ).